A 766-amino-acid polypeptide reads, in one-letter code: Leucine-rich repeat and fibronectin type III domain-containing protein 1 (766 aa).

The signal sequence occupies residues 1–31 (MAPGPFSSGLLSPPPAALPFLLLLWAGASRG). The LRRNT domain occupies 32 to 65 (QPCPGRCICQNVAPTLTMLCAKTGLLFVPPAIDR). The Extracellular segment spans residues 32-536 (QPCPGRCICQ…LRAHFLGGTM (505 aa)). 7 LRR repeats span residues 66 to 87 (RVVE…DFAN), 90 to 111 (SLVH…AFAD), 114 to 135 (ALRA…QLRG), 138 to 159 (NLRH…AFDA), 163 to 184 (TVED…AVGQ), 187 to 208 (NLNT…TFVQ), and 211 to 232 (KLVR…GLFL). Asn-87 is a glycosylation site (N-linked (GlcNAc...) asparagine). Residues 252-298 (NPLHCNCELLWLRRLTREDDLETCATPEHLTDRYFWSIPEEEFLCEP) enclose the LRRCT domain. Residues 299–386 (PLITRQAGGR…GEATAPVEVC (88 aa)) enclose the Ig-like domain. Cys-321 and Cys-370 are joined by a disulfide. Asn-343 carries N-linked (GlcNAc...) asparagine glycosylation. The segment at 397–422 (PAAPPPLTEPGSSDIATPGRPGANDS) is disordered. The Fibronectin type-III domain maps to 424-520 (TERRLVAAEL…GCVQFTTAGD (97 aa)). A helical membrane pass occupies residues 537–557 (IIAIGGVIVASVLVFIVLLMI). Residues 558 to 766 (RYKVYGDGDS…STEWMLESTV (209 aa)) are Cytoplasmic-facing. Disordered stretches follow at residues 568–601 (RRIK…PPAP) and 646–742 (CLLP…GEDG). Ser-713 is modified (phosphoserine). Residues 714 to 727 (YPRRARRTKRHRST) are compositionally biased toward basic residues.

It belongs to the LRFN family. Forms heteromeric complexes with LRFN2, LRFN4 and LRFN5; binding to LRFN2 and LRFN5 may be weaker than that to LRFN4. Also interacts with LRFN3. Forms homomeric complexes, but not across cell junctions. Interacts with DLG1, DLG2 and DLG4, but not with MAGI2, not CASK. Interacts with DLG3. Interacts with 2 AMPA receptor subunits GRIA1 and GRIA2 and NMDA receptor subunit GRIN1. Glycosylated. In terms of tissue distribution, mainly expressed in brain (at protein level) and testis. In brain, found in cerebral cortex (including pyramidal neurons), hippocampus (including CA3 and CA1 neurons), dentate gyrus, cerebellum (including Purkinje neurons) (at protein level) (at protein level). Also expressed in the olfactory bulb.

Its subcellular location is the membrane. It is found in the synapse. The protein resides in the postsynaptic density membrane. Functionally, promotes neurite outgrowth in hippocampal neurons. Involved in the regulation of the differentiation and maintenance of excitatory synapses. Induces the clustering of excitatory postsynaptic proteins, including DLG4, DLGAP1, GRIA1 and GRIN1. This is Leucine-rich repeat and fibronectin type III domain-containing protein 1 (Lrfn1) from Rattus norvegicus (Rat).